A 1840-amino-acid chain; its full sequence is MDVHTRWKAPRPGAPLLSSPLLLLLLLLWAPPPSRAAQPTDLLEMLDFHNLPSGVTKTTGFCATRRSSKEPDVAYRVSKDAQLSMPTKQLYPESDFPEDFSILTTVKAKKGSQAFLVSVYNEQGIQQLGLELGRSPVFLYEDHTGKPGPEEYPLFPGINLSDGKWHRIAISVYKKNVTLILDCKKKITKFLNRGDHPIIDVNGIIMFGSRILDDEIFEGDIQQLLFVSDHRAAYDYCEHYSPDCDTAVPDTPQSQDPNPDEYYPEGEGETYYYEYPYYEDPEDPGKEPAPSQKPVEAARETTEVPEEQTQPPSEAPTVPETSDTAGKEDNPGIGDYDYVPTDDYYTTSPYEDFGYGEGVENPDQPTNPDSGAEIPTSTSVTSNSSNPAPSPEEGKDDLGGEFTEETIKNLDENYYDPYFDPDSDSNVSPSEIGPGMPANQDTIYEGIGGPRGEKGQKGEPAIIEPGMLIEGPPGPEGPAGLPGPPGTTGPTGQMGDPGERGPPGRPGLPGADGLPGPPGTMLMLPFRFGGGGDAGSKGPMVSAQESQAQAILQQARLALRGPAGPMGLTGRPGPMGPPGSGGLKGEPGDMGPQGPRGVQGPPGPTGKPGRRGRAGSDGARGMPGQTGPKGDRGFDGLAGLPGEKGHRGDPGPSGPPGLPGDDGERGDDGEVGPRGLPGEPGPRGLLGPKGPPGPPGPPGVTGMDGQPGPKGNVGPQGEPGPPGQQGNPGAQGLPGPQGAIGPPGEKGPLGKPGLPGMPGADGPPGHPGKEGPPGEKGGQGPPGPQGPIGYPGPRGVKGADGIRGLKGTKGEKGEDGFPGFKGDMGIKGDRGEIGPPGPRGEDGPEGPKGRGGPNGDPGPLGPTGEKGKLGVPGLPGYPGRQGPKGSIGFPGFPGANGEKGGRGTPGKPGPRGQRGPTGPRGERGPRGITGKPGPKGNSGGDGPAGPPGERGPNGPQGPTGFPGPKGPPGPPGKDGLPGHPGQRGETGFQGKTGPPGPPGVVGPQGPTGETGPMGERGHPGPPGPPGEQGLPGAAGKEGTKGDPGPAGLPGKDGPPGLRGFPGDRGLPGPVGALGLKGSEGPPGPPGPAGSPGERGPAGAAGPIGIPGRPGPQGPPGPAGEKGVPGEEGPQGPAGRDGLQGPVGLPGPAGPVGPPGEDGDKGEIGEPGQKGSKGDKGEQGPPGPTGPQGPTGQPGPSGADGEPGPRGQQGLFGQKGDEGSRGFPGPPGPVGLQGLPGPPGEKGETGDVGQMGPPGPPGPRGPSGAPGADGPQGPPGGIGNPGAVGEKGEPGEAGEPGLPGEGGPLGPKGERGEKGEAGPSGAAGPPGPKGPPGDDGPKGSPGPVGFPGDPGPPGEPGPAGQDGPPGDKGDDGEPGQTGSPGPTGEPGPSGPPGKRGPPGPAGPEGRQGEKGAKGEAGLEGPPGKTGPIGPQGAPGKPGPDGLRGIPGPVGEQGLPGSPGPDGPPGPMGPPGLPGLKGDSGPKGEKGHPGLIGLIGPPGEQGEKGDRGLPGPQGSSGPKGEQGITGPSGPLGPPGPPGLPGPPGPKGAKGSSGPTGPKGEAGHPGLPGPPGPPGEVIQPLPIQASRTRRNIDASQLLDDGAGESYVDYADGMEEIFGSLNSLKLEIEQMKRPLGTQQNPARTCKDLQLCHPDFPDGEYWVDPNQGCSRDSFKVYCNFTAGGSTCVFPDKKSEGARITSWPKENPGSWFSEFKRGKLLSYVDAEGNPVGVVQMTFLRLLSASAQQNITYNCYQSVAWQDAATGSYDKAIRFLGSNDEEMSYDNNPYIRALVDGCATKKGYQKTVLEIDTPKVEQVPIVDIMFTDFGEASQKFGFEVGPACFLG.

Residues 1–30 (MDVHTRWKAPRPGAPLLSSPLLLLLLLLWA) form the signal peptide. The 173-residue stretch at 72–244 (DVAYRVSKDA…DYCEHYSPDC (173 aa)) folds into the Laminin G-like domain. Residues 231 to 445 (RAAYDYCEHY…MPANQDTIYE (215 aa)) are nonhelical region. Residues Tyr-234, Tyr-236, Tyr-240, Tyr-262, Tyr-263, Tyr-336, Tyr-338, and Tyr-344 each carry the sulfotyrosine modification. Disordered stretches follow at residues 241–547 (SPDC…QESQ) and 561–1576 (GPAG…EVIQ). Residues 258–268 (NPDEYYPEGEG) are compositionally biased toward acidic residues. Composition is skewed to low complexity over residues 335 to 352 (DYDY…PYED), 375 to 387 (PTST…SSNP), and 462 to 471 (IIEPGMLIEG). The tract at residues 446–560 (GIGGPRGEKG…ILQQARLALR (115 aa)) is interrupted collagenous region. Positions 472–487 (PPGPEGPAGLPGPPGT) are enriched in pro residues. 2 stretches are compositionally biased toward low complexity: residues 508–525 (LPGA…LMLP) and 561–572 (GPAGPMGLTGRP). Positions 561–1572 (GPAGPMGLTG…GLPGPPGPPG (1012 aa)) are triple-helical region. 4-hydroxyproline occurs at positions 572, 578, and 623. Position 629 is a 5-hydroxylysine (Lys-629). Pro-641 carries the post-translational modification 4-hydroxyproline. 5-hydroxylysine is present on Lys-644. Pro-650, Pro-656, Pro-659, Pro-677, and Pro-680 each carry 4-hydroxyproline. Residues 673-688 (PRGLPGEPGPRGLLGP) are compositionally biased toward low complexity. 3-hydroxyproline occurs at positions 682 and 688. Positions 689–698 (KGPPGPPGPP) are enriched in pro residues. A 4-hydroxyproline mark is found at Pro-692, Pro-698, and Pro-707. Lys-710 carries the post-translational modification 5-hydroxylysine. Pro-719, Pro-722, Pro-728, and Pro-734 each carry 4-hydroxyproline. Positions 724 to 743 (QQGNPGAQGLPGPQGAIGPP) are enriched in low complexity. Lys-746 carries the 5-hydroxylysine modification. The segment covering 749–758 (LGKPGLPGMP) has biased composition (low complexity). Residues Pro-752, Pro-758, Pro-764, Pro-767, and Pro-773 each carry the 4-hydroxyproline modification. Lys-776 is modified (5-hydroxylysine). Pro-782 and Pro-791 each carry 4-hydroxyproline. 5-hydroxylysine occurs at positions 797, 806, 809, and 812. At Pro-818 the chain carries 4-hydroxyproline. Lys-821 is subject to 5-hydroxylysine. Pro-836 carries the 4-hydroxyproline modification. Over residues 839 to 848 (RGEDGPEGPK) the composition is skewed to basic and acidic residues. 2 positions are modified to 5-hydroxylysine: Lys-848 and Lys-866. 4-hydroxyproline occurs at positions 872, 875, and 878. Residue Lys-884 is modified to 5-hydroxylysine. A 4-hydroxyproline mark is found at Pro-890 and Pro-893. Lys-899 is subject to 5-hydroxylysine. 4-hydroxyproline is present on residues Pro-905 and Pro-908. Low complexity predominate over residues 910–919 (PRGQRGPTGP). 4-hydroxyproline is present on residues Pro-932 and Pro-947. Low complexity-rich tracts occupy residues 973–992 (KDGL…QGKT) and 1001–1013 (VGPQ…TGPM). A 4-hydroxyproline mark is found at Pro-1019, Pro-1022, Pro-1025, and Pro-1031. Over residues 1090 to 1106 (SPGERGPAGAAGPIGIP) the composition is skewed to low complexity. Over residues 1108 to 1117 (RPGPQGPPGP) the composition is skewed to pro residues. 4-hydroxyproline occurs at positions 1223 and 1226. A compositionally biased stretch (low complexity) spans 1261–1270 (PSGAPGADGP). Residues 1296-1305 (GLPGEGGPLG) are compositionally biased toward gly residues. Composition is skewed to pro residues over residues 1382–1400 (TGEP…PGPA) and 1456–1471 (SPGP…PPGL). Residues Pro-1469 and Pro-1472 each carry the 4-hydroxyproline modification. Residues 1487-1496 (PGLIGLIGPP) are compositionally biased toward low complexity. Over residues 1528–1543 (PLGPPGPPGLPGPPGP) the composition is skewed to pro residues. The segment covering 1544 to 1556 (KGAKGSSGPTGPK) has biased composition (low complexity). The interval 1573-1607 (EVIQPLPIQASRTRRNIDASQLLDDGAGESYVDYA) is nonhelical region. Tyr-1603 and Tyr-1606 each carry sulfotyrosine. One can recognise a Fibrillar collagen NC1 domain in the interval 1611–1839 (EEIFGSLNSL…GFEVGPACFL (229 aa)).

Belongs to the fibrillar collagen family. As to quaternary structure, trimers of two alpha 1(V) and one alpha 2(V) chains in most tissues and trimers of one alpha 1(V), one alpha 2(V), and one alpha 3(V) chains in placenta. Interacts with CSPG4. Post-translationally, prolines at the third position of the tripeptide repeating unit (G-X-Y) are hydroxylated in some or all of the chains. In terms of processing, sulfated on 40% of tyrosines. Hydroxylation on proline residues within the sequence motif, GXPG, is most likely to be 4-hydroxy as this fits the requirement for 4-hydroxylation in vertebrates. In terms of tissue distribution, a high molecular weight form was detected in Schwann cells and peripheral nerve. A lower, probably processed form, is detected in all other tissues tested (at protein level).

The protein resides in the secreted. The protein localises to the extracellular space. It is found in the extracellular matrix. Type V collagen is a member of group I collagen (fibrillar forming collagen). It is a minor connective tissue component of nearly ubiquitous distribution. Type V collagen binds to DNA, heparan sulfate, thrombospondin, heparin, and insulin. In Rattus norvegicus (Rat), this protein is Collagen alpha-1(V) chain (Col5a1).